A 478-amino-acid polypeptide reads, in one-letter code: 2-succinylbenzoate--CoA ligase (478 aa).

Belongs to the ATP-dependent AMP-binding enzyme family. MenE subfamily.

It catalyses the reaction 2-succinylbenzoate + ATP + CoA = 2-succinylbenzoyl-CoA + AMP + diphosphate. Its pathway is quinol/quinone metabolism; 1,4-dihydroxy-2-naphthoate biosynthesis; 1,4-dihydroxy-2-naphthoate from chorismate: step 5/7. It participates in quinol/quinone metabolism; menaquinone biosynthesis. In terms of biological role, converts 2-succinylbenzoate (OSB) to 2-succinylbenzoyl-CoA (OSB-CoA). This Bacillus licheniformis (strain ATCC 14580 / DSM 13 / JCM 2505 / CCUG 7422 / NBRC 12200 / NCIMB 9375 / NCTC 10341 / NRRL NRS-1264 / Gibson 46) protein is 2-succinylbenzoate--CoA ligase.